The sequence spans 405 residues: MTKNSSTVFTHARIATLEEKAANLGLIEEAALVVKDARIVYAGPENKLPGEYASFEKIDCGNRLITPGLIDCHTHLVHAGNRAHEFELRLQGATYEEVARAGGGIVSSVRNLRAASEDDLVRETLPRLDALIAEGVTTVEVKSGYGLDRDSEIKSLKAARRLGEERDVAIRTTFLGAHALPPEMNGDKAAYIDRVINDMLPAIAEQGLADAVDGFCEGIAFLPDEIARVFDAAKAHDIPVKLHADQLSNLHGAALAASYGALSADHLEYTDGDGAAAMASAGTVAVLLPGAYYFIRETQKPPVEAFRAAGTKMALATDNNPGTSPLTSLLLTMNMGATLFRMTVEECIAGVTREAARALGILDQTGTLEIGKDADLAIWDIERPAELVYRIGFNPLWKRVFKGQI.

Residues His-73 and His-75 each coordinate Fe(3+). Zn(2+) contacts are provided by His-73 and His-75. 4-imidazolone-5-propanoate contacts are provided by Arg-82, Tyr-145, and His-178. Tyr-145 is a binding site for N-formimidoyl-L-glutamate. Fe(3+) is bound at residue His-243. His-243 is a Zn(2+) binding site. A 4-imidazolone-5-propanoate-binding site is contributed by Gln-246. Asp-318 is a Fe(3+) binding site. Asp-318 is a Zn(2+) binding site. N-formimidoyl-L-glutamate contacts are provided by Asn-320 and Gly-322. Thr-323 lines the 4-imidazolone-5-propanoate pocket.

Belongs to the metallo-dependent hydrolases superfamily. HutI family. Requires Zn(2+) as cofactor. Fe(3+) is required as a cofactor.

It is found in the cytoplasm. The enzyme catalyses 4-imidazolone-5-propanoate + H2O = N-formimidoyl-L-glutamate. It functions in the pathway amino-acid degradation; L-histidine degradation into L-glutamate; N-formimidoyl-L-glutamate from L-histidine: step 3/3. Functionally, catalyzes the hydrolytic cleavage of the carbon-nitrogen bond in imidazolone-5-propanoate to yield N-formimidoyl-L-glutamate. It is the third step in the universal histidine degradation pathway. This chain is Imidazolonepropionase, found in Brucella suis biovar 1 (strain 1330).